The primary structure comprises 876 residues: Neurotrypsin (876 aa).

The N-terminal stretch at 1-20 (MTLARFVLALMLGALPEVVG) is a signal peptide. N26 is a glycosylation site (N-linked (GlcNAc...) asparagine). The interval 29–89 (LHHSHRHSPP…ALQAGHTPRP (61 aa)) is disordered. A compositionally biased stretch (low complexity) spans 43 to 54 (YPSYYLPTQQRP). The segment covering 57-72 (TRPPPPLPRFPRPPRA) has biased composition (pro residues). In terms of domain architecture, Kringle spans 94–166 (CPAGEPWVSV…GKVDWGYCDC (73 aa)). 20 disulfides stabilise this stretch: C94-C166, C110-C150, C139-C164, C196-C260, C209-C270, C240-C250, C306-C370, C319-C380, C350-C360, C413-C476, C426-C486, C456-C466, C526-C590, C539-C600, C570-C580, C620-C751, C662-C678, C766-C832, C795-C809, and C822-C851. SRCR domains lie at 171–272 (VRLR…TCSF), 281–382 (IRLA…SCTP), 388–488 (IRLA…ACYP), and 501–602 (VRLM…ICDY). The segment at 620-631 (CGLRLLHRRQKR) is zymogen activation region. The region spanning 632–875 (IIGGKNSLRG…FVPWIKSVTK (244 aa)) is the Peptidase S1 domain. H677 (charge relay system) is an active-site residue. N-linked (GlcNAc...) asparagine glycosylation is present at N684. D727 (charge relay system) is an active-site residue. The active-site Charge relay system is the S826.

It belongs to the peptidase S1 family.

The protein localises to the secreted. Its function is as follows. Plays a role in neuronal plasticity and the proteolytic action may subserve structural reorganizations associated with learning and memory operations. The sequence is that of Neurotrypsin (PRSS12) from Gorilla gorilla gorilla (Western lowland gorilla).